The sequence spans 124 residues: Large ribosomal subunit protein bL12 (124 aa).

Belongs to the bacterial ribosomal protein bL12 family. In terms of assembly, homodimer. Part of the ribosomal stalk of the 50S ribosomal subunit. Forms a multimeric L10(L12)X complex, where L10 forms an elongated spine to which 2 to 4 L12 dimers bind in a sequential fashion. Binds GTP-bound translation factors.

Functionally, forms part of the ribosomal stalk which helps the ribosome interact with GTP-bound translation factors. Is thus essential for accurate translation. The protein is Large ribosomal subunit protein bL12 of Burkholderia cenocepacia (strain ATCC BAA-245 / DSM 16553 / LMG 16656 / NCTC 13227 / J2315 / CF5610) (Burkholderia cepacia (strain J2315)).